A 304-amino-acid polypeptide reads, in one-letter code: Ribosomal RNA small subunit methyltransferase H (304 aa).

Residues 37 to 39 (GGH), aspartate 57, phenylalanine 79, aspartate 100, and histidine 107 contribute to the S-adenosyl-L-methionine site.

It belongs to the methyltransferase superfamily. RsmH family.

It is found in the cytoplasm. The enzyme catalyses cytidine(1402) in 16S rRNA + S-adenosyl-L-methionine = N(4)-methylcytidine(1402) in 16S rRNA + S-adenosyl-L-homocysteine + H(+). In terms of biological role, specifically methylates the N4 position of cytidine in position 1402 (C1402) of 16S rRNA. The chain is Ribosomal RNA small subunit methyltransferase H from Bacteroides fragilis (strain YCH46).